We begin with the raw amino-acid sequence, 531 residues long: Pancreatic secretory granule membrane major glycoprotein GP2 (531 aa).

Positions 1 to 21 are cleaved as a signal peptide; that stretch reads MVGCDLLWLAAASCVLTLVSP. An N-linked (GlcNAc...) asparagine glycan is attached at N33. A beta hairpin region spans residues 34 to 53; that stretch reads SSNLDLDCGSPDSPSSGICF. Intrachain disulfides connect C41–C52, C56–C151, C79–C169, C101–C139, C107–C174, C132–C140, C184–C194, C188–C203, C205–C235, C223–C314, and C255–C278. Residues 54 to 74 form a D10C region; the sequence is DPCQNHTVLNDPTRSTENNDS. 2 N-linked (GlcNAc...) asparagine glycosylation sites follow: N58 and N72. In terms of domain architecture, EGF-like spans 180-224; the sequence is APKNCEITCRPEEECVFQNNNWSCVCRQDLHVSDSQSLQPLLDCG. N-linked (GlcNAc...) asparagine glycosylation is present at N200. The interval 222–315 is ZP-N; the sequence is DCGDNEIKVK…FRVNVNFQCA (94 aa). Residues 222–478 form the ZP domain; it reads DCGDNEIKVK…PSCSTNRLRS (257 aa). N-linked (GlcNAc...) asparagine glycosylation is found at N256 and N285. The flexible ZP-N/ZP-C linker stretch occupies residues 316–339; that stretch reads YPLDMSVSLETALQPIVSSLTVDV. An internal hydrophobic patch (IHP) region spans residues 340 to 351; it reads DGAGEFNVKMAL. The interval 340–478 is ZP-C; it reads DGAGEFNVKM…PSCSTNRLRS (139 aa). Intrachain disulfides connect C395–C455, C416–C471, and C460–C467. The external hydrophobic patch (EHP) stretch occupies residues 485 to 493; sequence YNRVLDLGP.

In terms of assembly, interacts with SYCN. Interacts with bacterial adhesin fimH. In terms of processing, N-glycosylated. Specifically expressed by M (microfold) cells which are atypical epithelial cells of the intestine.

It is found in the zymogen granule membrane. The protein localises to the secreted. Its subcellular location is the cell membrane. The protein resides in the apical cell membrane. It localises to the membrane raft. It is found in the endosome. Its function is as follows. Functions as an intestinal M-cell transcytotic receptor specific of type-I-piliated bacteria that participates in the mucosal immune response toward these bacteria. At the apical membrane of M-cells it binds fimH, a protein of the bacteria type I pilus tip. Internalizes bound bacteria, like E.coli and S.typhimurium, from the lumen of the intestine and delivers them, through M-cells, to the underlying organized lymphoid follicles where they are captured by antigen-presenting dendritic cells to elicit a mucosal immune response. The polypeptide is Pancreatic secretory granule membrane major glycoprotein GP2 (Mus musculus (Mouse)).